The chain runs to 119 residues: Integration host factor subunit alpha (119 aa).

A disordered region spans residues 96–119 (INGQQANGKMNGESAPSEFSAETE).

It belongs to the bacterial histone-like protein family. Heterodimer of an alpha and a beta chain.

Its function is as follows. This protein is one of the two subunits of integration host factor, a specific DNA-binding protein that functions in genetic recombination as well as in transcriptional and translational control. In Bradyrhizobium sp. (strain ORS 278), this protein is Integration host factor subunit alpha.